Consider the following 113-residue polypeptide: Hydrogenase maturation factor HybF (113 aa).

His-2 and Glu-3 together coordinate Ni(2+). Positions 73, 76, 89, and 92 each coordinate Zn(2+).

The protein belongs to the HypA/HybF family. HybF subfamily.

Functionally, involved in the maturation of [NiFe] hydrogenases. Required for nickel insertion into the metal center of the hydrogenase. In Proteus vulgaris, this protein is Hydrogenase maturation factor HybF.